A 513-amino-acid chain; its full sequence is MRLAYWMYAGPAHIGTLRVASSFKNVHAIMHAPLGDDYFNVMRSMLERERDFAPVTISIVDRHVLARGSREKVIENILRKDKEERPDLIILTPTCTSSILQEDLQNFANKASRISDSDVIFANIDHYRVNELQAADRTLEQVVKYYLDRSHGQETLDQSVTDVPSANIIGIFTLGFHNQHDCRELRRLLRDLDIKINQVIPEGGSVKDLINLPRAWFNLVPYREVGLMTAMYLENEFGMPYVSTTPMGAVDMAECIQQIHRNVNTLAPISSNKKVDYEPYIDGQTRFVSRAARFSRSIDCHNLTGKETVVFGDATHAASITKISIREMGIRVSCTGTYCKHDAEWFKEQIQDFCDKILITDDHTEVGDMIARVEPSAIFGTQMERHIGKRLDIPCGVISSPVHIQSFPLGYRPFLGYEGTNQIADPVYNSFALGMEDHLLDIFGGHDTKEIMTRSLSTGIGLIWDPESRRELSKIPHFVRNKVERNIEKFAQQKGIVNITTEVIYAAREVLGI.

Residue Asp36 participates in [4Fe-4S] cluster binding. Catalysis depends on Asp299, which acts as the Proton donor. Residue 434 to 435 participates in substrate binding; sequence GM.

This sequence belongs to the ChlB/BchB/BchZ family. Protochlorophyllide reductase is composed of three subunits; ChlL, ChlN and ChlB. Forms a heterotetramer of two ChlB and two ChlN subunits. [4Fe-4S] cluster serves as cofactor.

The protein localises to the plastid. The protein resides in the chloroplast. The catalysed reaction is chlorophyllide a + oxidized 2[4Fe-4S]-[ferredoxin] + 2 ADP + 2 phosphate = protochlorophyllide a + reduced 2[4Fe-4S]-[ferredoxin] + 2 ATP + 2 H2O. It functions in the pathway porphyrin-containing compound metabolism; chlorophyll biosynthesis (light-independent). Functionally, component of the dark-operative protochlorophyllide reductase (DPOR) that uses Mg-ATP and reduced ferredoxin to reduce ring D of protochlorophyllide (Pchlide) to form chlorophyllide a (Chlide). This reaction is light-independent. The NB-protein (ChlN-ChlB) is the catalytic component of the complex. This chain is Light-independent protochlorophyllide reductase subunit B, found in Cycas taitungensis (Prince sago).